The following is a 204-amino-acid chain: MFVKICGITSIDTAQAVVDANADMIGFVFAPSKRQLSTSLAEEIANTLPQTIQKVGVFVDEPLENILSIIERVNLDIVQLHGDESIDYQKRIPIPIIKAFPATTEGLNQANQSSAKYILIDSPPLQSSRGGNGVTFNWNILKDQPFTSKLILAGGLNTENIREAIKTVNPAGVDVSSGVETNGKKDAKKIQQFITNVQRKDVLR.

The protein belongs to the TrpF family.

It catalyses the reaction N-(5-phospho-beta-D-ribosyl)anthranilate = 1-(2-carboxyphenylamino)-1-deoxy-D-ribulose 5-phosphate. It functions in the pathway amino-acid biosynthesis; L-tryptophan biosynthesis; L-tryptophan from chorismate: step 3/5. This is N-(5'-phosphoribosyl)anthranilate isomerase from Oceanobacillus iheyensis (strain DSM 14371 / CIP 107618 / JCM 11309 / KCTC 3954 / HTE831).